The primary structure comprises 608 residues: UvrABC system protein C (608 aa).

The region spanning 18 to 96 is the GIY-YIG domain; sequence NQPGVYRMYN…IKKYKPRYNV (79 aa). In terms of domain architecture, UVR spans 206–241; the sequence is KQVIDSLVQHMERASTDLRFEAAARYRDQISALNKV.

The protein belongs to the UvrC family. As to quaternary structure, interacts with UvrB in an incision complex.

The protein resides in the cytoplasm. The UvrABC repair system catalyzes the recognition and processing of DNA lesions. UvrC both incises the 5' and 3' sides of the lesion. The N-terminal half is responsible for the 3' incision and the C-terminal half is responsible for the 5' incision. This chain is UvrABC system protein C, found in Pseudoalteromonas atlantica (strain T6c / ATCC BAA-1087).